The following is a 510-amino-acid chain: 2-isopropylmalate synthase (510 aa).

The 263-residue stretch at 5-267 folds into the Pyruvate carboxyltransferase domain; sequence LVIFDTTLRD…DTRIDTTQIV (263 aa). Residues D14, H202, H204, and N238 each contribute to the Mn(2+) site. The regulatory domain stretch occupies residues 392-510; it reads RLLSLHAVSE…SSLERTHPQI (119 aa).

This sequence belongs to the alpha-IPM synthase/homocitrate synthase family. LeuA type 1 subfamily. Homodimer. Mn(2+) is required as a cofactor.

The protein localises to the cytoplasm. It carries out the reaction 3-methyl-2-oxobutanoate + acetyl-CoA + H2O = (2S)-2-isopropylmalate + CoA + H(+). Its pathway is amino-acid biosynthesis; L-leucine biosynthesis; L-leucine from 3-methyl-2-oxobutanoate: step 1/4. In terms of biological role, catalyzes the condensation of the acetyl group of acetyl-CoA with 3-methyl-2-oxobutanoate (2-ketoisovalerate) to form 3-carboxy-3-hydroxy-4-methylpentanoate (2-isopropylmalate). The sequence is that of 2-isopropylmalate synthase from Nitrosomonas europaea (strain ATCC 19718 / CIP 103999 / KCTC 2705 / NBRC 14298).